The sequence spans 352 residues: Endophilin-A1 (352 aa).

The segment at 1–21 (MSVAGLKKQFHKATQKVSEKV) is membrane-binding amphipathic helix. The disordered stretch occupies residues 1–27 (MSVAGLKKQFHKATQKVSEKVGGAEGT). Positions 1–125 (MSVAGLKKQF…EVGEAMRELS (125 aa)) are binds and tubulates liposomes. The BAR domain maps to 18–249 (SEKVGGAEGT…LEERIRQASS (232 aa)). The segment at 60–87 (PNPASRAKLSMINTMSKIRGQEKGPGYP) is required for dimerization upon membrane association. A coiled-coil region spans residues 181-248 (EELRQALEKF…RLEERIRQAS (68 aa)). Ser262 carries the phosphoserine modification. The tract at residues 264–289 (EFATGDSTQPNGGLSHTGTPKPPGVQ) is disordered. Residues 268–281 (GDSTQPNGGLSHTG) are compositionally biased toward polar residues. The 60-residue stretch at 290–349 (MDQPCCRALYDFEPENEGELGFKEGDIITLTNQIDENWYEGMLHGQSGFFPINYVEILVA) folds into the SH3 domain. Residue Tyr299 is modified to Phosphotyrosine.

The protein belongs to the endophilin family. In terms of assembly, monomer; in cytoplasm. Homodimer; when associated with membranes. Interacts with SYNJ1. Interacts with DNM1. Interacts with MAP4K3; the interaction appears to regulate MAP4K3-mediated JNK activation. Interacts with OPHN1. Interacts with PDCD6IP. Interacts with BIN2. Interacts with ATXN2. Interacts with ADAM9 and ADAM15 cytoplasmic tails. Interacts with TMEM108. Interacts with ADGRB2.

The protein localises to the cytoplasm. It is found in the membrane. The protein resides in the early endosome. Its subcellular location is the presynapse. Implicated in synaptic vesicle endocytosis. May recruit other proteins to membranes with high curvature. Required for BDNF-dependent dendrite outgrowth. Cooperates with SH3GL2 to mediate BDNF-NTRK2 early endocytic trafficking and signaling from early endosomes. This is Endophilin-A1 (Sh3gl2) from Mus musculus (Mouse).